Here is an 897-residue protein sequence, read N- to C-terminus: Leucine--tRNA ligase (897 aa).

Residues 49–59 carry the 'HIGH' region motif; the sequence is PYPSGKLHMGH. The short motif at 654–658 is the 'KMSKS' region element; sequence KMSKS. An ATP-binding site is contributed by Lys-657.

The protein belongs to the class-I aminoacyl-tRNA synthetase family.

The protein localises to the cytoplasm. It catalyses the reaction tRNA(Leu) + L-leucine + ATP = L-leucyl-tRNA(Leu) + AMP + diphosphate. This Methylibium petroleiphilum (strain ATCC BAA-1232 / LMG 22953 / PM1) protein is Leucine--tRNA ligase.